Reading from the N-terminus, the 247-residue chain is PF03932 family protein CutC (247 aa).

The protein belongs to the CutC family.

The protein resides in the cytoplasm. The polypeptide is PF03932 family protein CutC (Klebsiella pneumoniae subsp. pneumoniae (strain ATCC 700721 / MGH 78578)).